The primary structure comprises 702 residues: Polyribonucleotide nucleotidyltransferase (702 aa).

The Mg(2+) site is built by Asp-485 and Asp-491. Residues 552–611 (PKTSTLQIDPEKIRDVIGAGGKVINKIIADTGVKIDIKEDGLVYVSSAESEGVKEAVKII) enclose the KH domain. Residues 621-689 (GEIYLGKVTK…SQGRINLSRK (69 aa)) form the S1 motif domain.

The protein belongs to the polyribonucleotide nucleotidyltransferase family. Mg(2+) is required as a cofactor.

It is found in the cytoplasm. The enzyme catalyses RNA(n+1) + phosphate = RNA(n) + a ribonucleoside 5'-diphosphate. Involved in mRNA degradation. Catalyzes the phosphorolysis of single-stranded polyribonucleotides processively in the 3'- to 5'-direction. This is Polyribonucleotide nucleotidyltransferase from Clostridium perfringens (strain ATCC 13124 / DSM 756 / JCM 1290 / NCIMB 6125 / NCTC 8237 / Type A).